A 359-amino-acid chain; its full sequence is Epoxide hydrolase 4 (359 aa).

Residues 15-35 form a helical; Signal-anchor for type II membrane protein membrane-spanning segment; the sequence is ALLYWSLVYGYCGLCASVHLL. Positions 92 to 337 constitute an AB hydrolase-1 domain; it reads PLMLLLHGFP…ILSEGSHWLQ (246 aa). The Nucleophile role is filled by D167. The active-site Proton donor is Y279. H334 acts as the Proton acceptor in catalysis.

The protein belongs to the AB hydrolase superfamily. Epoxide hydrolase family.

It is found in the membrane. The polypeptide is Epoxide hydrolase 4 (Ephx4) (Mus musculus (Mouse)).